A 305-amino-acid chain; its full sequence is UPF0282 protein Tneu_0934 (305 aa).

The protein belongs to the UPF0282 family.

The protein is UPF0282 protein Tneu_0934 of Pyrobaculum neutrophilum (strain DSM 2338 / JCM 9278 / NBRC 100436 / V24Sta) (Thermoproteus neutrophilus).